Consider the following 297-residue polypeptide: Molybdate/tungstate import ATP-binding protein WtpC (297 aa).

The ABC transporter domain maps to 2-226 (LKVNNLSKIW…PKNKKVAEFL (225 aa)). 32–39 (GPSGAGKS) serves as a coordination point for ATP.

The protein belongs to the ABC transporter superfamily. Sulfate/tungstate importer (TC 3.A.1.6) family. The complex is composed of two ATP-binding proteins (WtpC), two transmembrane proteins (WtpB) and a solute-binding protein (WtpA).

It localises to the cell membrane. The catalysed reaction is tungstate(in) + ATP + H2O = tungstate(out) + ADP + phosphate + H(+). In terms of biological role, part of the ABC transporter complex WtpABC involved in molybdate/tungstate import. Responsible for energy coupling to the transport system. This chain is Molybdate/tungstate import ATP-binding protein WtpC (wtpC), found in Methanocaldococcus jannaschii (strain ATCC 43067 / DSM 2661 / JAL-1 / JCM 10045 / NBRC 100440) (Methanococcus jannaschii).